A 912-amino-acid chain; its full sequence is Protein SLFN14 (912 aa).

A required for endoribonuclease activity region spans residues 206–391 (ESTHVEFKRF…KVHKFKEALQ (186 aa)). Residues 392–571 (RHLFPVTQEE…QMGCEFFNLL (180 aa)) are required for ribosome binding. An ATP-binding site is contributed by 593 to 600 (CFPGVRKT).

Belongs to the Schlafen family. Subgroup III subfamily. Associates with ribosomes in an ATP-independent manner. Mg(2+) serves as cofactor. It depends on Mn(2+) as a cofactor. Expressed in megakaryocytes and platelets (at protein level). Weakly expressed in melanocytes and malignant melanoma cells.

The protein resides in the nucleus. Shows no ribosome-associated and endoribonuclease activities. In terms of biological role, displays polysome-associated endoribonuclease activity towards mRNAs and rRNAs. May play a role in RNA surveillance pathways by recognizing stalled ribosomes and triggering endonucleolytic cleavage of aberrant mRNAs. Cleaves different types of rRNAs and mRNAs in a magnesium- and manganese-dependent and ATP-independent manner. Involved in correct maturation of megakaryocytes and especially important for proplatelet extension. In Homo sapiens (Human), this protein is Protein SLFN14.